The sequence spans 359 residues: Gap junction alpha-5 protein (359 aa).

Residues 1–19 (MGDWSFLGEFLEEVHKHST) are Cytoplasmic-facing. The chain crosses the membrane as a helical span at residues 20–40 (VIGKVWLTVLFIFRMLVLGTA). Over 41–76 (AESSWGDEQADFLCDTMQPGCENVCYDQAFPISHIR) the chain is Extracellular. A helical transmembrane segment spans residues 77–97 (YWVLQVIFVSTPSLVYLGHAV). At 98–165 (HMVRVQEKRK…CSILIRTTME (68 aa)) the chain is on the cytoplasmic side. A helical membrane pass occupies residues 166-186 (VAFIVGQYLLYGVFLDTLHVC). Residues 187–206 (RRSPCPHPVNCYVSRPTEKN) lie on the Extracellular side of the membrane. The chain crosses the membrane as a helical span at residues 207–227 (VFIVFMLAVAGLSLFLSLAEL). Residues 228–359 (YHLGWKKIRQ…SKARSDDLSV (132 aa)) lie on the Cytoplasmic side of the membrane. Disordered regions lie at residues 285 to 305 (SNKM…VRSQ) and 317 to 359 (RYAQ…DLSV). Residues Ser354 and Ser358 each carry the phosphoserine modification.

This sequence belongs to the connexin family. Alpha-type (group II) subfamily. A connexon is composed of a hexamer of connexins.

It is found in the cell membrane. The protein resides in the cell junction. It localises to the gap junction. In terms of biological role, one gap junction consists of a cluster of closely packed pairs of transmembrane channels, the connexons, through which materials of low MW diffuse from one cell to a neighboring cell. The protein is Gap junction alpha-5 protein (GJA5) of Bos taurus (Bovine).